A 555-amino-acid polypeptide reads, in one-letter code: MNCKAVTISLLLLLFLTRVYIQPTFSLISDCDETFNYWEPLNLLVRGFGKQTWEYSPEYSIRSWAFLLPFYCILYPVNKFTDLESHWNFFITRACLGFFSFIMEFKLHREIAGSLALQIANIWIIFQLFNPGWFHASVELLPSAVAMLLYVGATRHSLRYLSTGSTSNFTKSLAYNFLASILGWPFVLILSLPLCLHYLFNHRIISTIRTAFDCCLIFSLTAFAVIVTDSIFYGKLAPVSWNILFYNVINASEESGPNIFGVEPWYYYPLNLLLNFPLPVLVLAILGIFHLRLWPLWASLFTWIAVFTQQPHKEERFLYPIYGLITLSASIAFYKVLNLFNRKPILKKGIKLSVLLIVAGQAMSRIVALVNNYTAPIAVYEQFSSLNQGGVKAPVVNVCTGREWYHFPSSFLLPDNHRLKFVKSGFDGLLPGDFPESGSIFKKIRTLPKGMNNKNIYDTGKEWPITRCDYFIDIVAPINLTKDVFNPLHLMDNWNKLACAAFIDGENSKILGRAFYVPEPINRIMQIVLPKQWNQVYGVRYIDYCLFEKPTETTN.

Over 1 to 7 (MNCKAVT) the chain is Cytoplasmic. A helical transmembrane segment spans residues 8–28 (ISLLLLLFLTRVYIQPTFSLI). Over 29 to 62 (SDCDETFNYWEPLNLLVRGFGKQTWEYSPEYSIR) the chain is Lumenal. A helical transmembrane segment spans residues 63-83 (SWAFLLPFYCILYPVNKFTDL). The Cytoplasmic portion of the chain corresponds to 84–86 (ESH). The chain crosses the membrane as a helical span at residues 87–107 (WNFFITRACLGFFSFIMEFKL). Residues 108–113 (HREIAG) lie on the Lumenal side of the membrane. Residues 114 to 134 (SLALQIANIWIIFQLFNPGWF) traverse the membrane as a helical segment. At 135–176 (HASVELLPSAVAMLLYVGATRHSLRYLSTGSTSNFTKSLAYN) the chain is on the cytoplasmic side. Residues 177 to 197 (FLASILGWPFVLILSLPLCLH) form a helical membrane-spanning segment. Residues 198 to 213 (YLFNHRIISTIRTAFD) are Lumenal-facing. Residues 214-234 (CCLIFSLTAFAVIVTDSIFYG) traverse the membrane as a helical segment. Topologically, residues 235–268 (KLAPVSWNILFYNVINASEESGPNIFGVEPWYYY) are cytoplasmic. A helical transmembrane segment spans residues 269–289 (PLNLLLNFPLPVLVLAILGIF). Topologically, residues 290–316 (HLRLWPLWASLFTWIAVFTQQPHKEER) are lumenal. A helical membrane pass occupies residues 317–337 (FLYPIYGLITLSASIAFYKVL). Over 338 to 349 (NLFNRKPILKKG) the chain is Cytoplasmic. Residues 350 to 370 (IKLSVLLIVAGQAMSRIVALV) form a helical membrane-spanning segment. Topologically, residues 371-555 (NNYTAPIAVY…LFEKPTETTN (185 aa)) are lumenal.

The protein belongs to the glycosyltransferase 22 family.

It localises to the endoplasmic reticulum membrane. It carries out the reaction an alpha-D-Man-(1-&gt;2)-alpha-D-Man-(1-&gt;2)-alpha-D-Man-(1-&gt;3)-[alpha-D-Man-(1-&gt;3)-alpha-D-Man-(1-&gt;6)]-beta-D-Man-(1-&gt;4)-beta-D-GlcNAc-(1-&gt;4)-alpha-D-GlcNAc-diphospho-di-trans,poly-cis-dolichol + a di-trans,poly-cis-dolichyl beta-D-mannosyl phosphate = an alpha-D-Man-(1-&gt;2)-alpha-D-Man-(1-&gt;2)-alpha-D-Man-(1-&gt;3)-[alpha-D-Man-(1-&gt;2)-alpha-D-Man-(1-&gt;3)-alpha-D-Man-(1-&gt;6)]-beta-D-Man-(1-&gt;4)-beta-D-GlcNAc-(1-&gt;4)-alpha-D-GlcNAc-diphospho-di-trans,poly-cis-dolichol + a di-trans,poly-cis-dolichyl phosphate + H(+). It catalyses the reaction an alpha-D-Man-(1-&gt;2)-alpha-D-Man-(1-&gt;2)-alpha-D-Man-(1-&gt;3)-[alpha-D-Man-(1-&gt;2)-alpha-D-Man-(1-&gt;3)-[alpha-D-Man-(1-&gt;6)]-alpha-D-Man-(1-&gt;6)]-beta-D-Man-(1-&gt;4)-beta-D-GlcNAc-(1-&gt;4)-alpha-D-GlcNAc-diphospho-di-trans,poly-cis-dolichol + a di-trans,poly-cis-dolichyl beta-D-mannosyl phosphate = an alpha-D-Man-(1-&gt;2)-alpha-D-Man-(1-&gt;2)-alpha-D-Man-(1-&gt;3)-[alpha-D-Man-(1-&gt;2)-alpha-D-Man-(1-&gt;3)-[alpha-D-Man-(1-&gt;2)-alpha-D-Man-(1-&gt;6)]-alpha-D-Man-(1-&gt;6)]-beta-D-Man-(1-&gt;4)-beta-D-GlcNAc-(1-&gt;4)-alpha-D-GlcNAc-diphospho-di-trans,poly-cis-dolichol + a di-trans,poly-cis-dolichyl phosphate + H(+). Its pathway is protein modification; protein glycosylation. Its function is as follows. Mannosyltransferase that operates in the biosynthetic pathway of dolichol-linked oligosaccharides, the glycan precursors employed in protein asparagine (N)-glycosylation. The assembly of dolichol-linked oligosaccharides begins on the cytosolic side of the endoplasmic reticulum membrane and finishes in its lumen. The sequential addition of sugars to dolichol pyrophosphate produces dolichol-linked oligosaccharides containing fourteen sugars, including two GlcNAcs, nine mannoses and three glucoses. Once assembled, the oligosaccharide is transferred from the lipid to nascent proteins by oligosaccharyltransferases. In the lumen of the endoplasmic reticulum, catalyzes the addition of the seventh and ninth alpha-1,2-linked mannose residues to Man(6)GlcNAc(2)-PP-dolichol and Man(8)GlcNAc(2)-PP-dolichol respectively. The sequence is that of Alpha-1,2-mannosyltransferase ALG9 (ALG9) from Saccharomyces cerevisiae (strain ATCC 204508 / S288c) (Baker's yeast).